Here is a 628-residue protein sequence, read N- to C-terminus: MGRKKFEAFGFVCLISLLLLFNSLWLASSNMEGDALHSLRANLVDPNNVLQSWDPTLVNPCTWFHVTCNNENSVIRVDLGNADLSGQLVPQLGQLKNLQYLELYSNNITGPVPSDLGNLTNLVSLDLYLNSFTGPIPDSLGKLFKLRFLRLNNNSLTGPIPMSLTNIMTLQVLDLSNNRLSGSVPDNGSFSLFTPISFANNLDLCGPVTSRPCPGSPPFSPPPPFIPPPIVPTPGGYSATGAIAGGVAAGAALLFAAPALAFAWWRRRKPQEFFFDVPAEEDPEVHLGQLKRFSLRELQVATDSFSNKNILGRGGFGKVYKGRLADGTLVAVKRLKEERTPGGELQFQTEVEMISMAVHRNLLRLRGFCMTPTERLLVYPYMANGSVASCLRERPPSQLPLAWSIRQQIALGSARGLSYLHDHCDPKIIHRDVKAANILLDEEFEAVVGDFGLARLMDYKDTHVTTAVRGTIGHIAPEYLSTGKSSEKTDVFGYGIMLLELITGQRAFDLARLANDDDVMLLDWVKGLLKEKKLEMLVDPDLQSNYTEAEVEQLIQVALLCTQSSPMERPKMSEVVRMLEGDGLAEKWDEWQKVEVLRQEVELSSHPTSDWILDSTDNLHAMELSGPR.

An N-terminal signal peptide occupies residues 1-29; the sequence is MGRKKFEAFGFVCLISLLLLFNSLWLASS. At 30–241 the chain is on the extracellular side; that stretch reads NMEGDALHSL…PTPGGYSATG (212 aa). Positions 45–85 are PSKR1 binding; sequence DPNNVLQSWDPTLVNPCTWFHVTCNNENSVIRVDLGNADLS. Residues 56–58 form a CLE44 binding region; that stretch reads TLV. C61 and C68 are disulfide-bonded. Leucine-rich repeat receptor-like protein kinase binding regions lie at residues 62-81 and 100-105; these read TWFHVTCNNENSVIRVDLGN and YLELYS. 64–65 serves as a coordination point for brassinolide; it reads FH. 4 LRR repeats span residues 95–119, 121–143, 144–167, and 168–192; these read LKNLQYLELYSNNITGPVPSDLGNL, NLVSLDLYLNSFTGPIPDSLGKL, FKLRFLRLNNNSLTGPIPMSLTNI, and MTLQVLDLSNNRLSGSVPDNGSFSL. N107 and N118 each carry an N-linked (GlcNAc...) asparagine glycan. 2 leucine-rich repeat receptor-like protein kinase binding regions span residues 126 to 129 and 148 to 150; these read DLYL and FLR. Residues N153 and N187 are each glycosylated (N-linked (GlcNAc...) asparagine). Residues 174 to 197 are leucine-rich repeat receptor-like protein kinase binding; sequence DLSNNRLSGSVPDNGSFSLFTPIS. The cysteines at positions 205 and 213 are disulfide-linked. A helical membrane pass occupies residues 242–262; that stretch reads AIAGGVAAGAALLFAAPALAF. At 263–628 the chain is on the cytoplasmic side; sequence AWWRRRKPQE…LHAMELSGPR (366 aa). T302 carries the phosphothreonine modification. Residues 305 to 592 enclose the Protein kinase domain; it reads FSNKNILGRG…GLAEKWDEWQ (288 aa). Residue 311–319 coordinates ATP; sequence LGRGGFGKV. T328 is modified (phosphothreonine). Residue K333 coordinates ATP. Residues S386 and S389 each carry the phosphoserine modification. Catalysis depends on D432, which acts as the Proton acceptor. Phosphothreonine is present on residues T462, T465, T466, and T471. At Y479 the chain carries Phosphotyrosine. The residue at position 481 (S481) is a Phosphoserine. T482 carries the post-translational modification Phosphothreonine. S486 carries the phosphoserine modification. T562 bears the Phosphothreonine mark. S604 is modified (phosphoserine). Residue T616 is modified to Phosphothreonine. S625 carries the post-translational modification Phosphoserine.

It belongs to the protein kinase superfamily. Ser/Thr protein kinase family. In terms of assembly, homo- and heterodimer. Component of the SERK1 signaling complex, composed of KAPP, CDC48A, GRF6 or GRF7, SERK1, SERK2, SERK3/BAK1 and BRI1. Bind to BRI1 in a brassinolide-dependent manner. Heterodimer with PSKR1. Interacts with the EF-Tu receptor EFR and FLS2 in a specific ligand-induced manner. Interacts with ERECTA in a EPF2-induced manner. Interacts with ERL1 in a EPF1-induced manner. Interacts with TMM. In the presence of the signal peptide RGF1, interacts with RGI3/RGFR1 and RGI4/RGFR2/SKM2. Binds to the peptide CLE44 in the presence of TDR. In terms of processing, autophosphorylated. Expressed in flowers, tapetum, developing microspores, all cells of the embryo sac, provascular strands and developing vascular bundles. Low expression in adult vascular tissue.

The protein localises to the cell membrane. It carries out the reaction L-seryl-[protein] + ATP = O-phospho-L-seryl-[protein] + ADP + H(+). The enzyme catalyses L-threonyl-[protein] + ATP = O-phospho-L-threonyl-[protein] + ADP + H(+). Serine/threonine-kinase involved in brassinosteroid-dependent and -independent signaling pathways. Acts redundantly with SERK1 as a control point for sporophytic development controlling male gametophyte production. Serves as coreceptor to small peptide (e.g. RGF1 and CLE44) signaling. Involved in the perception of phytosulfokine and subsequent signal transduction. In Arabidopsis thaliana (Mouse-ear cress), this protein is Somatic embryogenesis receptor kinase 2.